Here is a 601-residue protein sequence, read N- to C-terminus: UvrABC system protein C (601 aa).

The 79-residue stretch at 17 to 95 (TLPGVYRMLD…IKALAPRYNI (79 aa)) folds into the GIY-YIG domain. The 36-residue stretch at 204–239 (SELINELTRRMTAAAEAMAFEQAAELRDQIQALARV) folds into the UVR domain.

The protein belongs to the UvrC family. In terms of assembly, interacts with UvrB in an incision complex.

It localises to the cytoplasm. The UvrABC repair system catalyzes the recognition and processing of DNA lesions. UvrC both incises the 5' and 3' sides of the lesion. The N-terminal half is responsible for the 3' incision and the C-terminal half is responsible for the 5' incision. In Chromobacterium violaceum (strain ATCC 12472 / DSM 30191 / JCM 1249 / CCUG 213 / NBRC 12614 / NCIMB 9131 / NCTC 9757 / MK), this protein is UvrABC system protein C.